A 114-amino-acid chain; its full sequence is uncharacterized protein (114 aa).

A compositionally biased stretch (basic residues) spans 18-29 (TRKRNSHKKVTK). 2 disordered regions span residues 18–47 (TRKR…RRTG) and 65–108 (SRPR…KLLN). The span at 30-41 (RAVEKRKQDSTR) shows a compositional bias: basic and acidic residues.

This is an uncharacterized protein from Homo sapiens (Human).